The following is a 158-amino-acid chain: SsrA-binding protein (158 aa).

It belongs to the SmpB family.

The protein localises to the cytoplasm. Its function is as follows. Required for rescue of stalled ribosomes mediated by trans-translation. Binds to transfer-messenger RNA (tmRNA), required for stable association of tmRNA with ribosomes. tmRNA and SmpB together mimic tRNA shape, replacing the anticodon stem-loop with SmpB. tmRNA is encoded by the ssrA gene; the 2 termini fold to resemble tRNA(Ala) and it encodes a 'tag peptide', a short internal open reading frame. During trans-translation Ala-aminoacylated tmRNA acts like a tRNA, entering the A-site of stalled ribosomes, displacing the stalled mRNA. The ribosome then switches to translate the ORF on the tmRNA; the nascent peptide is terminated with the 'tag peptide' encoded by the tmRNA and targeted for degradation. The ribosome is freed to recommence translation, which seems to be the essential function of trans-translation. The polypeptide is SsrA-binding protein (Glaesserella parasuis serovar 5 (strain SH0165) (Haemophilus parasuis)).